A 161-amino-acid chain; its full sequence is Anaerobic nitrite reductase HB2 (161 aa).

Residues 5 to 154 (VFTEKQEALV…LALAIKAEMK (150 aa)) enclose the Globin domain. Positions 38–42 (EIAPA) match the Homodimerization motif. Heme b-binding residues include S48, K62, H66, and H101. The Homodimerization signature appears at 108-120 (DPHFEVVKEALVR).

The protein belongs to the plant globin family. As to quaternary structure, homodimer. Heme b is required as a cofactor.

Its subcellular location is the cytoplasm. The protein localises to the nucleus. It catalyses the reaction Fe(III)-heme b-[protein] + nitric oxide + H2O = Fe(II)-heme b-[protein] + nitrite + 2 H(+). Phytoglobin that reduces nitrite to nitric oxide (NO) under anoxic conditions (e.g. during flooding or in waterlogged soil). May not function as an oxygen storage or transport protein. Has an unusually high affinity for O(2) through an hexacoordinate heme iron because of a very low dissociation constant. The sequence is that of Anaerobic nitrite reductase HB2 from Brassica napus (Rape).